A 355-amino-acid chain; its full sequence is Uroporphyrinogen decarboxylase (355 aa).

Residues arginine 27 to arginine 31, aspartate 78, tyrosine 155, serine 210, and histidine 328 each bind substrate.

Belongs to the uroporphyrinogen decarboxylase family. As to quaternary structure, homodimer.

It localises to the cytoplasm. The enzyme catalyses uroporphyrinogen III + 4 H(+) = coproporphyrinogen III + 4 CO2. It participates in porphyrin-containing compound metabolism; protoporphyrin-IX biosynthesis; coproporphyrinogen-III from 5-aminolevulinate: step 4/4. Catalyzes the decarboxylation of four acetate groups of uroporphyrinogen-III to yield coproporphyrinogen-III. In Pseudomonas paraeruginosa (strain DSM 24068 / PA7) (Pseudomonas aeruginosa (strain PA7)), this protein is Uroporphyrinogen decarboxylase.